A 196-amino-acid chain; its full sequence is uncharacterized protein (196 aa).

This sequence to H.influenzae HI_0431.

This is an uncharacterized protein from Escherichia coli (strain K12).